Consider the following 595-residue polypeptide: Beta-hexosaminidase 1 (595 aa).

An N-terminal signal peptide occupies residues M1–A20. N313 is a glycosylation site (N-linked (GlcNAc...) asparagine).

It belongs to the glycosyl hydrolase 20 family.

The enzyme catalyses Hydrolysis of terminal non-reducing N-acetyl-D-hexosamine residues in N-acetyl-beta-D-hexosaminides.. Beta-hexosaminidase that shows a broad substrate specificity. The polypeptide is Beta-hexosaminidase 1 (Coccidioides posadasii (strain RMSCC 757 / Silveira) (Valley fever fungus)).